We begin with the raw amino-acid sequence, 173 residues long: ATP synthase subunit b (173 aa).

A helical membrane pass occupies residues 18–38 (IFWSLVILIIVAVFFYKFFLP).

It belongs to the ATPase B chain family. F-type ATPases have 2 components, F(1) - the catalytic core - and F(0) - the membrane proton channel. F(1) has five subunits: alpha(3), beta(3), gamma(1), delta(1), epsilon(1). F(0) has three main subunits: a(1), b(2) and c(10-14). The alpha and beta chains form an alternating ring which encloses part of the gamma chain. F(1) is attached to F(0) by a central stalk formed by the gamma and epsilon chains, while a peripheral stalk is formed by the delta and b chains.

It is found in the cell membrane. Its function is as follows. F(1)F(0) ATP synthase produces ATP from ADP in the presence of a proton or sodium gradient. F-type ATPases consist of two structural domains, F(1) containing the extramembraneous catalytic core and F(0) containing the membrane proton channel, linked together by a central stalk and a peripheral stalk. During catalysis, ATP synthesis in the catalytic domain of F(1) is coupled via a rotary mechanism of the central stalk subunits to proton translocation. Component of the F(0) channel, it forms part of the peripheral stalk, linking F(1) to F(0). The chain is ATP synthase subunit b from Bifidobacterium adolescentis (strain ATCC 15703 / DSM 20083 / NCTC 11814 / E194a).